The following is a 599-amino-acid chain: Sulfite reductase [NADPH] flavoprotein alpha-component (599 aa).

The region spanning 64–202 is the Flavodoxin-like domain; that stretch reads ITLISASQTG…VAAQWRARIV (139 aa). FMN is bound by residues 70-75, 117-120, and 153-162; these read SQTGNA, STQG, and LGDTSYEFFC. In terms of domain architecture, FAD-binding FR-type spans 234–448; sequence EAPLRASLSV…IEHNDNFRLP (215 aa). Residues T322, A356, 386–389, 404–406, Y410, and 419–422 contribute to the FAD site; these read RLYS, TVG, and GGAS. NADP(+)-binding positions include 519 to 520, 525 to 529, and D561; these read SR and KIYVQ. Residue Y599 participates in FAD binding.

This sequence belongs to the NADPH-dependent sulphite reductase flavoprotein subunit CysJ family. In the N-terminal section; belongs to the flavodoxin family. It in the C-terminal section; belongs to the flavoprotein pyridine nucleotide cytochrome reductase family. Alpha(8)-beta(8). The alpha component is a flavoprotein, the beta component is a hemoprotein. FAD serves as cofactor. The cofactor is FMN.

The enzyme catalyses hydrogen sulfide + 3 NADP(+) + 3 H2O = sulfite + 3 NADPH + 4 H(+). It functions in the pathway sulfur metabolism; hydrogen sulfide biosynthesis; hydrogen sulfide from sulfite (NADPH route): step 1/1. In terms of biological role, component of the sulfite reductase complex that catalyzes the 6-electron reduction of sulfite to sulfide. This is one of several activities required for the biosynthesis of L-cysteine from sulfate. The flavoprotein component catalyzes the electron flow from NADPH -&gt; FAD -&gt; FMN to the hemoprotein component. This is Sulfite reductase [NADPH] flavoprotein alpha-component from Salmonella arizonae (strain ATCC BAA-731 / CDC346-86 / RSK2980).